The primary structure comprises 144 residues: 3-hydroxyacyl-[acyl-carrier-protein] dehydratase FabZ (144 aa).

His-51 is an active-site residue.

This sequence belongs to the thioester dehydratase family. FabZ subfamily.

The protein localises to the cytoplasm. The enzyme catalyses a (3R)-hydroxyacyl-[ACP] = a (2E)-enoyl-[ACP] + H2O. Involved in unsaturated fatty acids biosynthesis. Catalyzes the dehydration of short chain beta-hydroxyacyl-ACPs and long chain saturated and unsaturated beta-hydroxyacyl-ACPs. In Clostridium botulinum (strain Langeland / NCTC 10281 / Type F), this protein is 3-hydroxyacyl-[acyl-carrier-protein] dehydratase FabZ.